A 318-amino-acid chain; its full sequence is MAVVVYAPASIGNVSVGFDVLGAAVSPIDGTLLGDRVMVKAGNEPFSLKTAGSFVAKLPSDPKENIVYDCWRVFARELDKKGLELKPLEMTLEKNMPIGSGLGSSACSIVAALDALNQFHANPLDEMELLALMGEMEGQISGGVHYDNVAPCYLGGLQLMLEELGIISQEVPCFDDWYWVMAYPGIKVSTAEARAILPSQYRRQDVIAHGRHLAGFIHACHSGQPELAAKMIKDVIAEPYREKLLPGFADARKYAASAGALATGISGSGPTLFSICKDQDVAQRVARWLEQNYVQNEEGFVHICRLDKKGSIVTGSEL.

97 to 107 (PIGSGLGSSAC) lines the ATP pocket.

This sequence belongs to the GHMP kinase family. Homoserine kinase subfamily.

It is found in the cytoplasm. The enzyme catalyses L-homoserine + ATP = O-phospho-L-homoserine + ADP + H(+). It functions in the pathway amino-acid biosynthesis; L-threonine biosynthesis; L-threonine from L-aspartate: step 4/5. In terms of biological role, catalyzes the ATP-dependent phosphorylation of L-homoserine to L-homoserine phosphate. The chain is Homoserine kinase from Vibrio vulnificus (strain CMCP6).